Reading from the N-terminus, the 189-residue chain is Potassium-transporting ATPase KdpC subunit (189 aa).

The helical transmembrane segment at 8 to 28 threads the bilayer; it reads LVMLILLTLITGIAYPLLTTG.

It belongs to the KdpC family. The system is composed of three essential subunits: KdpA, KdpB and KdpC.

The protein resides in the cell inner membrane. Part of the high-affinity ATP-driven potassium transport (or Kdp) system, which catalyzes the hydrolysis of ATP coupled with the electrogenic transport of potassium into the cytoplasm. This subunit acts as a catalytic chaperone that increases the ATP-binding affinity of the ATP-hydrolyzing subunit KdpB by the formation of a transient KdpB/KdpC/ATP ternary complex. The protein is Potassium-transporting ATPase KdpC subunit of Serratia proteamaculans (strain 568).